Consider the following 179-residue polypeptide: Stathmin-2 (179 aa).

Residues 1-26 (MAKTAMAYKEKMKELSMLSLICSCFY) are membrane attachment. Phosphoserine occurs at positions 16, 50, 62, 73, 80, and 97. An SLD domain is found at 38 to 179 (DDMEVKQINK…NKELQVELSG (142 aa)). The segment at 39 to 96 (DMEVKQINKRASGQAFELILKPPSPVSEAPRTLASPKKKELSLEEIQKKLEAAEERRK) is regulatory/phosphorylation domain. The stretch at 74 to 179 (PKKKELSLEE…NKELQVELSG (106 aa)) forms a coiled coil.

The protein belongs to the stathmin family. As to expression, expression is neuron-specific and found in cerebellum, forebrain, midbrain, tectum and spinal cord.

Its subcellular location is the cytoplasm. It localises to the perinuclear region. The protein resides in the cell projection. The protein localises to the growth cone. It is found in the membrane. Its subcellular location is the axon. It localises to the lamellipodium. Is a key regulator of neurite extension through regulation of microtubule instabilily. The protein is Stathmin-2 (STMN2) of Gallus gallus (Chicken).